The following is a 348-amino-acid chain: Mannonate dehydratase (348 aa).

It belongs to the mannonate dehydratase family. It depends on Fe(2+) as a cofactor. The cofactor is Mn(2+).

The catalysed reaction is D-mannonate = 2-dehydro-3-deoxy-D-gluconate + H2O. The protein operates within carbohydrate metabolism; pentose and glucuronate interconversion. Functionally, catalyzes the dehydration of D-mannonate. This Staphylococcus haemolyticus (strain JCSC1435) protein is Mannonate dehydratase.